We begin with the raw amino-acid sequence, 101 residues long: Small ribosomal subunit protein uS14 (101 aa).

It belongs to the universal ribosomal protein uS14 family. As to quaternary structure, part of the 30S ribosomal subunit. Contacts proteins S3 and S10.

Functionally, binds 16S rRNA, required for the assembly of 30S particles and may also be responsible for determining the conformation of the 16S rRNA at the A site. In Leptothrix cholodnii (strain ATCC 51168 / LMG 8142 / SP-6) (Leptothrix discophora (strain SP-6)), this protein is Small ribosomal subunit protein uS14.